Here is a 280-residue protein sequence, read N- to C-terminus: AAKMAKNVDKPLFTATFNVQASSADYATFIAGIRNKLRNPAHFSHNEPVLPPVEPNVPPSRWFHVVLKASPTSAGLTLAIRADNIYLEGFKSSDGTWWELTPGLIPGATYVGFGGTYRDLLGDTDKLTNVALGRQQLEDAVTALHGRTKADKASGPKQQQAREAVTTLLLMVNEATRFQTVSGFVAGLLHPKAVEKKSGKIGNEMKAQVNGWQDLSAALLKTDVKPPPGKSPAKFTPIEKMGVRTAEQAAATLGILLFVEVPGGLTVAKALELFHASGGK.

The residue at position 1 (alanine 1) is an N-acetylalanine. Glutamate 174 is an active-site residue.

The protein belongs to the ribosome-inactivating protein family. Type 1 RIP subfamily.

It is found in the cytoplasm. The enzyme catalyses Endohydrolysis of the N-glycosidic bond at one specific adenosine on the 28S rRNA.. Functionally, inhibits the elongation phase of protein synthesis. It inactivates fungal ribosomes even more effectively than mammalian ribosomes and is thought to function as a constitutive antifungal agent in plants. The chain is Protein synthesis inhibitor II (RIP30A) from Hordeum vulgare (Barley).